A 237-amino-acid polypeptide reads, in one-letter code: Octopine transport system permease protein OccQ (237 aa).

An ABC transmembrane type-1 domain is found at 22 to 222; sequence TGMTVAVASS…LITFISGQAF (201 aa). A run of 4 helical transmembrane segments spans residues 24-44, 72-92, 96-116, and 201-221; these read MTVA…CLGA, LVIY…GSLF, GFVS…VSAA, and FSFY…SGQA.

Belongs to the binding-protein-dependent transport system permease family. HisMQ subfamily.

It is found in the cell inner membrane. In terms of biological role, component of the octopine active transport system probably consisting of four subunits: Q, M, P and T. In Rhizobium meliloti (Ensifer meliloti), this protein is Octopine transport system permease protein OccQ (occQ).